Here is a 231-residue protein sequence, read N- to C-terminus: Homeobox protein engrailed-1a (231 aa).

Disordered stretches follow at residues 1-29 (MEDQ…AHRN), 43-105 (GCKR…KDSQ), and 121-148 (DRPS…RPRT). A compositionally biased stretch (basic and acidic residues) spans 43–56 (GCKRERERVTRDSG). Positions 68-102 (DGVSSSASSTVSSPVSSRQSNKVEQGSSKSSSPSK) are enriched in low complexity. The homeobox DNA-binding region spans 143–202 (DKRPRTAFTAEQLQRLKAEFQTSRYITEQRRQALARELGLNESQIKIWFQNKRAKIKKSS).

The protein belongs to the engrailed homeobox family.

The protein resides in the nucleus. This Danio rerio (Zebrafish) protein is Homeobox protein engrailed-1a (eng1a).